We begin with the raw amino-acid sequence, 365 residues long: 3-isopropylmalate dehydrogenase (365 aa).

NAD(+) is bound at residue glycine 78–glutamate 91. Positions 99, 109, 139, and 228 each coordinate substrate. Mg(2+) contacts are provided by aspartate 228, aspartate 252, and aspartate 256. Glycine 286–asparagine 298 lines the NAD(+) pocket.

This sequence belongs to the isocitrate and isopropylmalate dehydrogenases family. LeuB type 1 subfamily. Homodimer. It depends on Mg(2+) as a cofactor. Mn(2+) serves as cofactor.

The protein resides in the cytoplasm. It carries out the reaction (2R,3S)-3-isopropylmalate + NAD(+) = 4-methyl-2-oxopentanoate + CO2 + NADH. Its pathway is amino-acid biosynthesis; L-leucine biosynthesis; L-leucine from 3-methyl-2-oxobutanoate: step 3/4. In terms of biological role, catalyzes the oxidation of 3-carboxy-2-hydroxy-4-methylpentanoate (3-isopropylmalate) to 3-carboxy-4-methyl-2-oxopentanoate. The product decarboxylates to 4-methyl-2 oxopentanoate. This is 3-isopropylmalate dehydrogenase from Buchnera aphidicola subsp. Macrosiphoniella ludovicianae.